The primary structure comprises 370 residues: Spermidine/putrescine import ATP-binding protein PotA 1 (370 aa).

The ABC transporter domain maps to 12–250 (VSIRAVRKVY…PGNRFVADFI (239 aa)). Residue 48–55 (GPSGCGKT) participates in ATP binding.

It belongs to the ABC transporter superfamily. Spermidine/putrescine importer (TC 3.A.1.11.1) family. The complex is composed of two ATP-binding proteins (PotA), two transmembrane proteins (PotB and PotC) and a solute-binding protein (PotD).

Its subcellular location is the cell inner membrane. The enzyme catalyses ATP + H2O + polyamine-[polyamine-binding protein]Side 1 = ADP + phosphate + polyamineSide 2 + [polyamine-binding protein]Side 1.. In terms of biological role, part of the ABC transporter complex PotABCD involved in spermidine/putrescine import. Responsible for energy coupling to the transport system. In Pseudomonas aeruginosa (strain ATCC 15692 / DSM 22644 / CIP 104116 / JCM 14847 / LMG 12228 / 1C / PRS 101 / PAO1), this protein is Spermidine/putrescine import ATP-binding protein PotA 1.